A 274-amino-acid polypeptide reads, in one-letter code: Ribosomal RNA small subunit methyltransferase A (274 aa).

6 residues coordinate S-adenosyl-L-methionine: H15, L17, G42, E64, D89, and N109.

The protein belongs to the class I-like SAM-binding methyltransferase superfamily. rRNA adenine N(6)-methyltransferase family. RsmA subfamily.

Its subcellular location is the cytoplasm. The enzyme catalyses adenosine(1518)/adenosine(1519) in 16S rRNA + 4 S-adenosyl-L-methionine = N(6)-dimethyladenosine(1518)/N(6)-dimethyladenosine(1519) in 16S rRNA + 4 S-adenosyl-L-homocysteine + 4 H(+). In terms of biological role, specifically dimethylates two adjacent adenosines (A1518 and A1519) in the loop of a conserved hairpin near the 3'-end of 16S rRNA in the 30S particle. May play a critical role in biogenesis of 30S subunits. The protein is Ribosomal RNA small subunit methyltransferase A of Synechococcus sp. (strain CC9605).